The following is a 185-amino-acid chain: Elongation factor P (185 aa).

Belongs to the elongation factor P family.

It localises to the cytoplasm. Its pathway is protein biosynthesis; polypeptide chain elongation. Functionally, involved in peptide bond synthesis. Stimulates efficient translation and peptide-bond synthesis on native or reconstituted 70S ribosomes in vitro. Probably functions indirectly by altering the affinity of the ribosome for aminoacyl-tRNA, thus increasing their reactivity as acceptors for peptidyl transferase. The sequence is that of Elongation factor P from Burkholderia cenocepacia (strain HI2424).